A 253-amino-acid polypeptide reads, in one-letter code: Electron transfer flavoprotein subunit beta, mitochondrial (253 aa).

This sequence belongs to the ETF beta-subunit/FixA family. Heterodimer of an alpha and a beta subunit. The cofactor is FAD. It depends on AMP as a cofactor.

It localises to the mitochondrion matrix. Functionally, the electron transfer flavoprotein serves as a specific electron acceptor for several dehydrogenases, including five acyl-CoA dehydrogenases, glutaryl-CoA and sarcosine dehydrogenase. It transfers the electrons to the main mitochondrial respiratory chain via ETF-ubiquinone oxidoreductase (ETF dehydrogenase). The polypeptide is Electron transfer flavoprotein subunit beta, mitochondrial (ETFB) (Oryza sativa subsp. japonica (Rice)).